The chain runs to 403 residues: 8-amino-7-oxononanoate synthase (403 aa).

R30 provides a ligand contact to substrate. A pyridoxal 5'-phosphate-binding site is contributed by 121-122; sequence GY. H146 is a binding site for substrate. Pyridoxal 5'-phosphate contacts are provided by S192, H220, and T248. Position 251 is an N6-(pyridoxal phosphate)lysine (K251). T367 is a binding site for substrate.

Belongs to the class-II pyridoxal-phosphate-dependent aminotransferase family. BioF subfamily. Homodimer. Pyridoxal 5'-phosphate is required as a cofactor.

The enzyme catalyses 6-carboxyhexanoyl-[ACP] + L-alanine + H(+) = (8S)-8-amino-7-oxononanoate + holo-[ACP] + CO2. It participates in cofactor biosynthesis; biotin biosynthesis. Catalyzes the decarboxylative condensation of pimeloyl-[acyl-carrier protein] and L-alanine to produce 8-amino-7-oxononanoate (AON), [acyl-carrier protein], and carbon dioxide. The polypeptide is 8-amino-7-oxononanoate synthase (Burkholderia vietnamiensis (strain G4 / LMG 22486) (Burkholderia cepacia (strain R1808))).